We begin with the raw amino-acid sequence, 251 residues long: Hydroxyacylglutathione hydrolase (251 aa).

Zn(2+) is bound by residues histidine 53, histidine 55, aspartate 57, histidine 58, histidine 110, aspartate 127, and histidine 165.

The protein belongs to the metallo-beta-lactamase superfamily. Glyoxalase II family. In terms of assembly, monomer. The cofactor is Zn(2+).

The catalysed reaction is an S-(2-hydroxyacyl)glutathione + H2O = a 2-hydroxy carboxylate + glutathione + H(+). The protein operates within secondary metabolite metabolism; methylglyoxal degradation; (R)-lactate from methylglyoxal: step 2/2. Its function is as follows. Thiolesterase that catalyzes the hydrolysis of S-D-lactoyl-glutathione to form glutathione and D-lactic acid. The protein is Hydroxyacylglutathione hydrolase of Enterobacter sp. (strain 638).